The chain runs to 134 residues: UPF0412 protein YaaI (134 aa).

The first 23 residues, 1–23 (MRSVLTISVGLLFGLALSSVAHA), serve as a signal peptide directing secretion.

The protein belongs to the UPF0412 family.

The sequence is that of UPF0412 protein YaaI from Salmonella typhimurium (strain LT2 / SGSC1412 / ATCC 700720).